We begin with the raw amino-acid sequence, 386 residues long: WD repeat-containing protein 89 (386 aa).

6 WD repeats span residues 21-65, 68-107, 112-156, 167-207, 213-253, and 318-357; these read KEPT…LLRE, GSPG…EKPA, GYPS…QDLS, THSD…EEDA, NSVS…TDEP, and GHAA…KTFT.

This chain is WD repeat-containing protein 89 (Wdr89), found in Rattus norvegicus (Rat).